Consider the following 463-residue polypeptide: Glutamate--tRNA ligase 1 (463 aa).

A 'HIGH' region motif is present at residues Pro11 to Gly21. Positions Lys240 to Arg244 match the 'KMSKS' region motif. Position 243 (Lys243) interacts with ATP.

It belongs to the class-I aminoacyl-tRNA synthetase family. Glutamate--tRNA ligase type 1 subfamily. As to quaternary structure, monomer.

Its subcellular location is the cytoplasm. The catalysed reaction is tRNA(Glu) + L-glutamate + ATP = L-glutamyl-tRNA(Glu) + AMP + diphosphate. Catalyzes the attachment of glutamate to tRNA(Glu) in a two-step reaction: glutamate is first activated by ATP to form Glu-AMP and then transferred to the acceptor end of tRNA(Glu). In Campylobacter jejuni subsp. doylei (strain ATCC BAA-1458 / RM4099 / 269.97), this protein is Glutamate--tRNA ligase 1.